Reading from the N-terminus, the 210-residue chain is Putative methyltransferase ECU09_1500 (210 aa).

Belongs to the methyltransferase superfamily.

The protein is Putative methyltransferase ECU09_1500 of Encephalitozoon cuniculi (strain GB-M1) (Microsporidian parasite).